The primary structure comprises 599 residues: UvrABC system protein C (599 aa).

The GIY-YIG domain occupies 15 to 93; the sequence is PCPGVYRMLD…IKALQPRYNV (79 aa). The UVR domain maps to 202 to 237; it reads QQVINELVIRMEEASGQLAFEQAAYYRDRIASLRQI.

It belongs to the UvrC family. As to quaternary structure, interacts with UvrB in an incision complex.

The protein localises to the cytoplasm. In terms of biological role, the UvrABC repair system catalyzes the recognition and processing of DNA lesions. UvrC both incises the 5' and 3' sides of the lesion. The N-terminal half is responsible for the 3' incision and the C-terminal half is responsible for the 5' incision. This is UvrABC system protein C from Nitrosococcus oceani (strain ATCC 19707 / BCRC 17464 / JCM 30415 / NCIMB 11848 / C-107).